The sequence spans 393 residues: Dual specificity mitogen-activated protein kinase kinase 1 (393 aa).

Residues 1–27 (MPKKKPTPIQLNPAPDGSAVNGTSSAE) form a disordered region. The 294-residue stretch at 68–361 (FEKISELGAG…LKQLMVHAFI (294 aa)) folds into the Protein kinase domain. ATP-binding positions include 74 to 82 (LGAGNGGVV), Lys97, 143 to 146 (MEHM), and 150 to 153 (SLDQ). Lys97 serves as a coordination point for U0126. 144 to 146 (EHM) contributes to the K-252a binding site. Residue Asp190 is the Proton acceptor of the active site. Residues 192–195 (KPSN) and Asp208 each bind ATP. Ser194 contacts K-252a. Residue 208–211 (DFGV) coordinates U0126. Phosphoserine; by BRAF and RAF1 is present on residues Ser218 and Ser222. The interval 270–307 (ELELMFGCQVEGDAAETPPRPRTPGRPLSSYGMDSRPP) is RAF1-binding. The residue at position 286 (Thr286) is a Phosphothreonine. Thr292 is modified (phosphothreonine; by MAPK1). At Ser298 the chain carries Phosphoserine; by PAK.

The protein belongs to the protein kinase superfamily. STE Ser/Thr protein kinase family. MAP kinase kinase subfamily. In terms of assembly, found in a complex with at least BRAF, HRAS, MAP2K1, MAPK3/ERK1 and RGS14. Forms a heterodimer with MAP2K2/MEK2. Forms heterodimers with KSR2 which further dimerize to form tetramers. Interacts with KSR1 or KSR2 and BRAF; the interaction with KSR1 or KSR2 mediates KSR1-BRAF or KSR2-BRAF dimerization. Interacts with ARBB2, LAMTOR3 and RAF1. Interacts with MAPK1/ERK2. Interacts with MORG1. Interacts with PPARG. Interacts with isoform 1 of VRK2. Interacts with SGK1. Interacts with BIRC6/bruce. Interacts with KAT7; the interaction promotes KAT7 phosphorylation. Interacts with RAF1 and NEK10; the interaction is required for ERK1/2-signaling pathway activation in response to UV irradiation. Interacts with TRAF3IP3. Interacts with MOS. As to quaternary structure, (Microbial infection) Interacts with Yersinia YopJ. Phosphorylation at Ser-218 and Ser-222 by MAP kinase kinase kinases (BRAF or MEKK1) positively regulates kinase activity. Also phosphorylated at Thr-292 by MAPK1/ERK2 and at Ser-298 by PAK. MAPK1/ERK2 phosphorylation of Thr-292 occurs in response to cellular adhesion and leads to inhibition of Ser-298 phosphorylation by PAK. Autophosphorylated at Ser-218 and Ser-222, autophosphosphorylation is promoted by NEK10 following UV irradiation. Post-translationally, (Microbial infection) Acetylation by Yersinia YopJ prevents phosphorylation and activation, thus blocking the MAPK signaling pathway. Widely expressed, with extremely low levels in brain.

The protein localises to the cytoplasm. Its subcellular location is the cytoskeleton. It is found in the microtubule organizing center. It localises to the centrosome. The protein resides in the spindle pole body. The protein localises to the nucleus. Its subcellular location is the membrane. The catalysed reaction is L-seryl-[protein] + ATP = O-phospho-L-seryl-[protein] + ADP + H(+). The enzyme catalyses L-threonyl-[protein] + ATP = O-phospho-L-threonyl-[protein] + ADP + H(+). It carries out the reaction L-tyrosyl-[protein] + ATP = O-phospho-L-tyrosyl-[protein] + ADP + H(+). With respect to regulation, ras proteins such as HRAS mediate the activation of RAF proteins such as RAF1 or BRAF which in turn activate extracellular signal-regulated kinases (ERK) through MAPK (mitogen-activated protein kinases) and ERK kinases MAP2K1/MEK1 and MAP2K2/MEK2. Activation occurs through phosphorylation of Ser-218 and Ser-222. MAP2K1/MEK1 binds KSR1 or KSR2 releasing the inhibitory intramolecular interaction between KSR1 or KSR2 protein kinase and N-terminal domains. This allows KSR1 or KSR2 dimerization with BRAF leading to BRAF activation and phosphorylation of MAP2K1. MAP2K1/MEK1 is also the target of negative feed-back regulation by its substrate kinases, such as MAPK1/ERK2. These phosphorylate MAP2K1/MEK1 on Thr-292, thereby facilitating dephosphorylation of the activating residues Ser-218 and Ser-222. Inhibited by serine/threonine phosphatase 2A. Many inhibitors have been identified including pyrrole derivatives, TAK-733 (one of a series of 8-methylpyrido[2,3-d]pyrimidine-4,7(3H,8H)-dione derivatives), CH4987655 and RDEA119/BAY 869766. Dual specificity protein kinase which acts as an essential component of the MAP kinase signal transduction pathway. Binding of extracellular ligands such as growth factors, cytokines and hormones to their cell-surface receptors activates RAS and this initiates RAF1 activation. RAF1 then further activates the dual-specificity protein kinases MAP2K1/MEK1 and MAP2K2/MEK2. Both MAP2K1/MEK1 and MAP2K2/MEK2 function specifically in the MAPK/ERK cascade, and catalyze the concomitant phosphorylation of a threonine and a tyrosine residue in a Thr-Glu-Tyr sequence located in the extracellular signal-regulated kinases MAPK3/ERK1 and MAPK1/ERK2, leading to their activation and further transduction of the signal within the MAPK/ERK cascade. Activates BRAF in a KSR1 or KSR2-dependent manner; by binding to KSR1 or KSR2 releases the inhibitory intramolecular interaction between KSR1 or KSR2 protein kinase and N-terminal domains which promotes KSR1 or KSR2-BRAF dimerization and BRAF activation. Depending on the cellular context, this pathway mediates diverse biological functions such as cell growth, adhesion, survival and differentiation, predominantly through the regulation of transcription, metabolism and cytoskeletal rearrangements. One target of the MAPK/ERK cascade is peroxisome proliferator-activated receptor gamma (PPARG), a nuclear receptor that promotes differentiation and apoptosis. MAP2K1/MEK1 has been shown to export PPARG from the nucleus. The MAPK/ERK cascade is also involved in the regulation of endosomal dynamics, including lysosome processing and endosome cycling through the perinuclear recycling compartment (PNRC), as well as in the fragmentation of the Golgi apparatus during mitosis. This chain is Dual specificity mitogen-activated protein kinase kinase 1, found in Homo sapiens (Human).